The primary structure comprises 407 residues: Protein phosphatase methylesterase 1 (407 aa).

The interval 1–53 (MSDLQKSFAKSKLAKLPPEPPPIPESVADEDDDSGSSTETVTPSPVKQLFARP) is disordered. Active-site residues include Ser185, Asp211, and His342. Positions 388 to 401 (GAGVPLGKAEGGTT) are enriched in gly residues. The interval 388–407 (GAGVPLGKAEGGTTGSFKRS) is disordered.

This sequence belongs to the AB hydrolase superfamily.

The catalysed reaction is [phosphatase 2A protein]-C-terminal L-leucine methyl ester + H2O = [phosphatase 2A protein]-C-terminal L-leucine + methanol + H(+). Its function is as follows. Demethylates proteins that have been reversibly carboxymethylated. Demethylates the phosphatase PP2A catalytic subunit. The polypeptide is Protein phosphatase methylesterase 1 (ppe1) (Emericella nidulans (strain FGSC A4 / ATCC 38163 / CBS 112.46 / NRRL 194 / M139) (Aspergillus nidulans)).